We begin with the raw amino-acid sequence, 569 residues long: Mitogen-activated protein kinase 8 (569 aa).

In terms of domain architecture, Protein kinase spans 13–304 (YKIQEVIGKG…AEEALADPYF (292 aa)). ATP contacts are provided by residues 19–27 (IGKGSYGVV) and lysine 42. Aspartate 139 functions as the Proton acceptor in the catalytic mechanism. Threonine 175 carries the phosphothreonine modification. Positions 175 to 177 (TDY) match the TXY motif. At tyrosine 177 the chain carries Phosphotyrosine. The tract at residues 404–432 (TTVHSAPIPPKDHQNITSQVPQRIPGRTG) is disordered.

The protein belongs to the protein kinase superfamily. CMGC Ser/Thr protein kinase family. MAP kinase subfamily. Dually phosphorylated on Thr-175 and Tyr-177, which activates the enzyme. In terms of tissue distribution, expressed in leaves and panicles.

It carries out the reaction L-seryl-[protein] + ATP = O-phospho-L-seryl-[protein] + ADP + H(+). The catalysed reaction is L-threonyl-[protein] + ATP = O-phospho-L-threonyl-[protein] + ADP + H(+). With respect to regulation, activated by threonine and tyrosine phosphorylation. The sequence is that of Mitogen-activated protein kinase 8 (MPK8) from Oryza sativa subsp. japonica (Rice).